The following is a 552-amino-acid chain: uncharacterized protein (552 aa).

Residues 8-200 (KLFADMIIQG…LLCVYEGFLK (193 aa)) enclose the DhaL domain.

This is an uncharacterized protein from Staphylococcus epidermidis (strain ATCC 12228 / FDA PCI 1200).